The chain runs to 128 residues: Glycine cleavage system H protein (128 aa).

Residues 24–106 (VATVGITAFA…YNNGWLLKIK (83 aa)) enclose the Lipoyl-binding domain. K65 carries the N6-lipoyllysine modification.

The protein belongs to the GcvH family. The glycine cleavage system is composed of four proteins: P, T, L and H. (R)-lipoate is required as a cofactor.

In terms of biological role, the glycine cleavage system catalyzes the degradation of glycine. The H protein shuttles the methylamine group of glycine from the P protein to the T protein. This is Glycine cleavage system H protein from Acaryochloris marina (strain MBIC 11017).